Here is a 1567-residue protein sequence, read N- to C-terminus: Myosin-2A (1567 aa).

The Myosin N-terminal SH3-like domain occupies 4 to 57 (EVGTRCWYPSKEQGWIGAEVTKNDLKDGTYFMELTLEDNEVVNVETKDLTNEKD). Positions 70 to 786 (ESTEDLTTLS…MLAYFEKLRS (717 aa)) constitute a Myosin motor domain. 164-171 (GESGAGKT) provides a ligand contact to ATP. Residues 446 to 526 (FIGVLDIYGF…LGILSLLDEE (81 aa)) are actin-binding. The tract at residues 619-640 (EEAKKNAASQDQKQLKKPTPIR) is disordered. IQ domains follow at residues 789 to 818 (MNSA…SLSL), 812 to 836 (MKAS…EYEL), 837 to 859 (EQHA…YISG), 860 to 884 (VISS…QSKY), 885 to 907 (ESNA…AYES), and 908 to 937 (KRRD…DAKS). Positions 947–1091 (KLENKVIQLT…LAHLQTSIAL (145 aa)) form a coiled coil. The interval 1092-1567 (GTVTTNTNIV…VAQQVTVPDA (476 aa)) is non alpha-helical, tail domain. One can recognise a Dilute domain in the interval 1230-1505 (AQVLTTIQKV…LKYVADIVKK (276 aa)).

Belongs to the TRAFAC class myosin-kinesin ATPase superfamily. Myosin family. Homodimer. Interacts with calmodulin (CMD1) and the myosin light chain MLC1 through its IQ repeats.

Functionally, myosin heavy chain that is required for the cell cycle-regulated transport of various organelles and proteins for their segregation. Functions by binding with its tail domain to receptor proteins on organelles and exerting force with its N-terminal motor domain against actin filaments, thereby transporting its cargo along polarized actin cables. In Naumovozyma castellii (Yeast), this protein is Myosin-2A (MYO2A).